Reading from the N-terminus, the 276-residue chain is Ribosomal RNA small subunit methyltransferase A (276 aa).

The S-adenosyl-L-methionine site is built by Asn-27, Leu-29, Gly-54, Glu-75, Asp-101, and Asn-122.

The protein belongs to the class I-like SAM-binding methyltransferase superfamily. rRNA adenine N(6)-methyltransferase family. RsmA subfamily.

It is found in the cytoplasm. The catalysed reaction is adenosine(1518)/adenosine(1519) in 16S rRNA + 4 S-adenosyl-L-methionine = N(6)-dimethyladenosine(1518)/N(6)-dimethyladenosine(1519) in 16S rRNA + 4 S-adenosyl-L-homocysteine + 4 H(+). In terms of biological role, specifically dimethylates two adjacent adenosines (A1518 and A1519) in the loop of a conserved hairpin near the 3'-end of 16S rRNA in the 30S particle. May play a critical role in biogenesis of 30S subunits. This Brucella suis (strain ATCC 23445 / NCTC 10510) protein is Ribosomal RNA small subunit methyltransferase A.